We begin with the raw amino-acid sequence, 187 residues long: Small ribosomal subunit protein uS5 (187 aa).

The disordered stretch occupies residues 1–20 (MAERENRRDRRDDRSREETP). The S5 DRBM domain occupies 22-85 (FADRLVAINR…EQAKRQMIRV (64 aa)). The segment at 154–174 (DGLKRESSPRQVAQRRGKKVA) is disordered.

It belongs to the universal ribosomal protein uS5 family. As to quaternary structure, part of the 30S ribosomal subunit. Contacts proteins S4 and S8.

Functionally, with S4 and S12 plays an important role in translational accuracy. Located at the back of the 30S subunit body where it stabilizes the conformation of the head with respect to the body. The chain is Small ribosomal subunit protein uS5 from Cereibacter sphaeroides (strain ATCC 17025 / ATH 2.4.3) (Rhodobacter sphaeroides).